The primary structure comprises 232 residues: Clarin-2 (232 aa).

4 consecutive transmembrane segments (helical) span residues 8 to 28 (VWYG…IVAL), 101 to 121 (ILLL…FAIL), 139 to 159 (LWNV…MAAV), and 188 to 208 (SFWI…VVAI).

This sequence belongs to the clarin family. Detected in inner ear, particularly in hair bundles of auditory hair cells and is enriched in apical stereocilia. Detected in eye, but not in brain or muscle.

The protein resides in the cell projection. It localises to the stereocilium membrane. Functionally, plays a key role to hearing function. Required for normal organization and maintenance of the stereocilia bundle and for mechano-electrical transduction. This is Clarin-2 from Mus musculus (Mouse).